Here is a 305-residue protein sequence, read N- to C-terminus: Hydrogen peroxide-inducible genes activator (305 aa).

Residues 1–58 enclose the HTH lysR-type domain; that stretch reads MNIRDLEYLVALAEHRHFRRAADSCHVSQPTLSGQIRKLEDELGVMLLERTSRKVLFT. Residues 18-37 constitute a DNA-binding region (H-T-H motif); it reads FRRAADSCHVSQPTLSGQIR. 2 disulfides stabilise this stretch: C180–C259 and C199–C208. C199 is modified (cysteine sulfenic acid (-SOH); alternate). An S-glutathionyl cysteine; alternate modification is found at C199. At C199 the chain carries S-nitrosocysteine; alternate.

It belongs to the LysR transcriptional regulatory family. In terms of assembly, homodimer and homotetramer. In terms of processing, oxidized on Cys-199; the Cys-SOH formed in response to oxidative signaling triggers a conformational change and the onset of transcriptional activity with a specific DNA-binding affinity. Cys-199-SOH rapidly reacts with Cys-208-SH to form a disulfide bond. S-nitrosylation in response to nitrosative signaling triggers a conformational change and the onset of transcriptional activity with a specific DNA-binding affinity. Post-translationally, glutathionylation in response to redox signaling triggers the onset of transcriptional activity with a specific DNA-binding affinity.

With respect to regulation, activated by oxidation of Cys-199 resulting in the alternative formation of cystine, sulfenic acid, S-nitroso- or glutathione-bound cysteine. Its function is as follows. Hydrogen peroxide sensor. Activates the expression of a regulon of hydrogen peroxide-inducible genes such as katG, gor, ahpC, ahpF, oxyS (a regulatory RNA), dps, fur and grxA. OxyR expression is negatively autoregulated by binding to a 43 bp region upstream of its own coding sequence. OxyR is inactivated by reduction of its essential disulfide bond by the product of GrxA, itself positively regulated by OxyR. Also has a positive regulatory effect on the production of surface proteins that control the colony morphology and auto-aggregation ability. This chain is Hydrogen peroxide-inducible genes activator (oxyR), found in Escherichia coli O157:H7.